We begin with the raw amino-acid sequence, 252 residues long: D-aminoacyl-tRNA deacylase (252 aa).

Belongs to the DtdA deacylase family. In terms of assembly, monomer. The cofactor is Zn(2+).

The enzyme catalyses a D-aminoacyl-tRNA + H2O = a tRNA + a D-alpha-amino acid + H(+). It carries out the reaction glycyl-tRNA(Ala) + H2O = tRNA(Ala) + glycine + H(+). Functionally, D-aminoacyl-tRNA deacylase with broad substrate specificity. By recycling D-aminoacyl-tRNA to D-amino acids and free tRNA molecules, this enzyme counteracts the toxicity associated with the formation of D-aminoacyl-tRNA entities in vivo. The protein is D-aminoacyl-tRNA deacylase of Pyrobaculum islandicum (strain DSM 4184 / JCM 9189 / GEO3).